The following is a 2335-amino-acid chain: Histone-lysine N-methyltransferase ATXR3 (2335 aa).

Disordered regions lie at residues 30–142, 332–355, 371–556, and 902–961; these read NESK…FKDE, STGN…SYAD, CSRS…SSSK, and DQVP…KTDT. 2 stretches are compositionally biased toward polar residues: residues 31 to 46 and 53 to 62; these read ESKT…TSIA and QPANKPSASS. Basic residues predominate over residues 65-84; the sequence is VKKKRIVKVIRKVVKRRPKQ. The Nuclear localization signal 1 signature appears at 67-74; sequence KKRIVKVI. Positions 97-112 are enriched in polar residues; sequence PPSQVVQLPAESQLQI. 3 stretches are compositionally biased toward basic and acidic residues: residues 340 to 353, 371 to 390, and 430 to 452; these read HGAE…KHSY, CSRS…RLYR, and WSPH…RERS. A compositionally biased stretch (basic residues) spans 461–475; it reads HARKRSPRDRRHHDY. Basic and acidic residues-rich tracts occupy residues 485–498, 507–548, and 910–921; these read SPHD…RRDY, QSDR…ESNG, and PRAKVRSKERCP. The Nuclear localization signal 2 motif lies at 527–534; sequence ERRDCQTG. Low complexity predominate over residues 922–932; it reads SRPARPSPASS. Over residues 941–961 the composition is skewed to polar residues; that stretch reads SHSQSTASTGQDSQGLWKTDT. The short motif at 1382–1389 is the Nuclear localization signal 3 element; the sequence is ARRSSAIL. The segment at 1532–1572 is disordered; the sequence is NRKSFSSESDTSSELSDNGKSDNYSSASASESESDIRSEGR. Low complexity predominate over residues 1535–1547; sequence SFSSESDTSSELS. Residues 1765–1904 form the SET domain; sequence KEIESRSDDK…YGEEITFDYN (140 aa). Position 1868 (cysteine 1868) interacts with Zn(2+). An S-adenosyl-L-methionine-binding site is contributed by tyrosine 1903. Residues 1914–1930 form the Post-SET domain; the sequence is EASVCLCGSQVCRGSYL. 3 residues coordinate Zn(2+): cysteine 1918, cysteine 1920, and cysteine 1925.

This sequence belongs to the class V-like SAM-binding methyltransferase superfamily. Histone-lysine methyltransferase family. TRX/MLL subfamily. As to expression, expressed in roots, leaves, stems and inflorescences.

It localises to the nucleus. It catalyses the reaction L-lysyl(4)-[histone H3] + 3 S-adenosyl-L-methionine = N(6),N(6),N(6)-trimethyl-L-lysyl(4)-[histone H3] + 3 S-adenosyl-L-homocysteine + 3 H(+). Histone methyltransferase specifically required for trimethylation of 'Lys-4' of histone H3 (H3K4me3) and is crucial for both sporophyte and gametophyte development. Function as a diurnal 'writer' to counteract the nocturne 'eraser' demethylase activity of JMJ14 thus orchestrating the circadian rhythm of histone modifications (e.g. H3K4me3) and modulating the rhythmic expression of diurnal target genes; this mechanism relies also on the circadian clock oscillators CCA1 and LHY. The protein is Histone-lysine N-methyltransferase ATXR3 of Arabidopsis thaliana (Mouse-ear cress).